The chain runs to 373 residues: Queuine tRNA-ribosyltransferase (373 aa).

The active-site Proton acceptor is the aspartate 90. Residues 90-94, aspartate 144, glutamine 193, and glycine 220 contribute to the substrate site; that span reads DSGGF. Residues 251–257 are RNA binding; it reads GVGTPED. The Nucleophile role is filled by aspartate 270. An RNA binding; important for wobble base 34 recognition region spans residues 275 to 279; sequence TRNAR. Residues cysteine 308, cysteine 310, cysteine 313, and histidine 339 each contribute to the Zn(2+) site.

This sequence belongs to the queuine tRNA-ribosyltransferase family. Homodimer. Within each dimer, one monomer is responsible for RNA recognition and catalysis, while the other monomer binds to the replacement base PreQ1. Zn(2+) is required as a cofactor.

The enzyme catalyses 7-aminomethyl-7-carbaguanine + guanosine(34) in tRNA = 7-aminomethyl-7-carbaguanosine(34) in tRNA + guanine. It participates in tRNA modification; tRNA-queuosine biosynthesis. Catalyzes the base-exchange of a guanine (G) residue with the queuine precursor 7-aminomethyl-7-deazaguanine (PreQ1) at position 34 (anticodon wobble position) in tRNAs with GU(N) anticodons (tRNA-Asp, -Asn, -His and -Tyr). Catalysis occurs through a double-displacement mechanism. The nucleophile active site attacks the C1' of nucleotide 34 to detach the guanine base from the RNA, forming a covalent enzyme-RNA intermediate. The proton acceptor active site deprotonates the incoming PreQ1, allowing a nucleophilic attack on the C1' of the ribose to form the product. After dissociation, two additional enzymatic reactions on the tRNA convert PreQ1 to queuine (Q), resulting in the hypermodified nucleoside queuosine (7-(((4,5-cis-dihydroxy-2-cyclopenten-1-yl)amino)methyl)-7-deazaguanosine). This Campylobacter jejuni subsp. jejuni serotype O:6 (strain 81116 / NCTC 11828) protein is Queuine tRNA-ribosyltransferase.